A 260-amino-acid polypeptide reads, in one-letter code: MTGPAAAPVPDAPASLDVSGLAFAYPDGHQALFGVDFCVARGERVALLGPNGAGKTTLVLHLNGILTGGTGTVTVAGLPVDKRNMAEIRRRVGIVFQDPDDQLFMPTVREDVAFGPAAAGVKGAELEACVDRALTLVGMAEFKDRPPHHLSFGQRRRVAVATVLAMEPEILVLDEPSSNLDPASRRELADILRSLDVTVLMVTHDLPYALELCPRALILSDGAIAADGPTAALLSDDDLMRAHRLELPFGFDPRSVRASG.

The ABC transporter domain maps to 16–246 (LDVSGLAFAY…DDLMRAHRLE (231 aa)). 49–56 (GPNGAGKT) serves as a coordination point for ATP.

Belongs to the ABC transporter superfamily.

The protein resides in the cell membrane. In terms of biological role, probably part of an ABC transporter complex. Responsible for energy coupling to the transport system. This chain is Putative ABC transporter ATP-binding protein SCO3161, found in Streptomyces coelicolor (strain ATCC BAA-471 / A3(2) / M145).